The sequence spans 160 residues: Transcription elongation factor GreA (160 aa).

A coiled-coil region spans residues 49 to 77 (SEYQSAKDEQAFVEGRIQTLKNMIDNAEI).

This sequence belongs to the GreA/GreB family.

Necessary for efficient RNA polymerase transcription elongation past template-encoded arresting sites. The arresting sites in DNA have the property of trapping a certain fraction of elongating RNA polymerases that pass through, resulting in locked ternary complexes. Cleavage of the nascent transcript by cleavage factors such as GreA or GreB allows the resumption of elongation from the new 3'terminus. GreA releases sequences of 2 to 3 nucleotides. The polypeptide is Transcription elongation factor GreA (Leuconostoc mesenteroides subsp. mesenteroides (strain ATCC 8293 / DSM 20343 / BCRC 11652 / CCM 1803 / JCM 6124 / NCDO 523 / NBRC 100496 / NCIMB 8023 / NCTC 12954 / NRRL B-1118 / 37Y)).